The chain runs to 561 residues: Urocanate hydratase (561 aa).

Residues 52-53 (GG), Q130, 176-178 (GMG), E196, R201, 242-243 (NA), 263-267 (QTSAH), 273-274 (YL), and Y322 each bind NAD(+). C410 is a catalytic residue. G492 is an NAD(+) binding site.

This sequence belongs to the urocanase family. NAD(+) serves as cofactor.

It is found in the cytoplasm. The catalysed reaction is 4-imidazolone-5-propanoate = trans-urocanate + H2O. It participates in amino-acid degradation; L-histidine degradation into L-glutamate; N-formimidoyl-L-glutamate from L-histidine: step 2/3. Functionally, catalyzes the conversion of urocanate to 4-imidazolone-5-propionate. The protein is Urocanate hydratase of Salmonella newport (strain SL254).